Consider the following 869-residue polypeptide: Protein translocase subunit SecA (869 aa).

ATP is bound by residues Q85, 103–107, and D508; that span reads GEGKT.

The protein belongs to the SecA family. In terms of assembly, monomer and homodimer. Part of the essential Sec protein translocation apparatus which comprises SecA, SecYEG and auxiliary proteins SecDF. Other proteins may also be involved.

It localises to the cell membrane. It is found in the cytoplasm. It carries out the reaction ATP + H2O + cellular proteinSide 1 = ADP + phosphate + cellular proteinSide 2.. Functionally, part of the Sec protein translocase complex. Interacts with the SecYEG preprotein conducting channel. Has a central role in coupling the hydrolysis of ATP to the transfer of proteins into and across the cell membrane, serving as an ATP-driven molecular motor driving the stepwise translocation of polypeptide chains across the membrane. This chain is Protein translocase subunit SecA, found in Deinococcus deserti (strain DSM 17065 / CIP 109153 / LMG 22923 / VCD115).